A 360-amino-acid chain; its full sequence is Photosystem II protein D1 2 (360 aa).

Residues 1–31 (MTTTLQQRESASLWEQFCQWVTSTNNRIYVG) are Cytoplasmic-facing. A helical transmembrane segment spans residues 32-53 (WFGTLMIPTLLTATTCFIIAFI). Topologically, residues 54 to 110 (AAPPVDIDGIREPVAGSLLYGNNIISGAVVPSSNAIGLHFYPIWEAASLDEWLYNGG) are lumenal, thylakoid. Residues 111-134 (PYQLVVFHFLIGIFCYMGRQWELS) form a helical membrane-spanning segment. H118 provides a ligand contact to chlorophyll a. Residue Y126 coordinates pheophytin a. At 135–142 (YRLGMRPW) the chain is on the cytoplasmic side. Residues 143 to 161 (ICVAYSAPVSAATAVFLIY) form a helical membrane-spanning segment. Y147 provides a ligand contact to pheophytin a. Residues 162–191 (PIGQGSFSDGMPLGISGTFNFMIVFQAEHN) lie on the Lumenal, thylakoid side of the membrane. The [CaMn4O5] cluster site is built by D170 and E189. A helical membrane pass occupies residues 192 to 218 (ILMHPFHMLGVAGVFGGSLFSAMHGSL). Residue H198 participates in chlorophyll a binding. A quinone-binding residues include H215, S264, and F265. Residue H215 participates in Fe cation binding. The Cytoplasmic portion of the chain corresponds to 219 to 270 (VTSSLVRETTEVESQNYGYKFGQEEETYNIVAAHGYFGRLIFQYASFNNSRS). A helical membrane pass occupies residues 271–295 (LHFFLGAWPVIGIWFTAMGVSTMAF). A Fe cation-binding site is contributed by H272. Residues 296-360 (NLNGFNFNQS…VALTAPAVNG (65 aa)) are Lumenal, thylakoid-facing. [CaMn4O5] cluster is bound by residues H332, E333, H337, D342, and A344. A propeptide spanning residues 345–360 (SGEQAPVALTAPAVNG) is cleaved from the precursor.

This sequence belongs to the reaction center PufL/M/PsbA/D family. PSII is composed of 1 copy each of membrane proteins PsbA, PsbB, PsbC, PsbD, PsbE, PsbF, PsbH, PsbI, PsbJ, PsbK, PsbL, PsbM, PsbT, PsbX, PsbY, PsbZ, Psb30/Ycf12, peripheral proteins PsbO, CyanoQ (PsbQ), PsbU, PsbV and a large number of cofactors. It forms dimeric complexes. The D1/D2 heterodimer binds P680, chlorophylls that are the primary electron donor of PSII, and subsequent electron acceptors. It shares a non-heme iron and each subunit binds pheophytin, quinone, additional chlorophylls, carotenoids and lipids. D1 provides most of the ligands for the Mn4-Ca-O5 cluster of the oxygen-evolving complex (OEC). There is also a Cl(-1) ion associated with D1 and D2, which is required for oxygen evolution. The PSII complex binds additional chlorophylls, carotenoids and specific lipids. serves as cofactor. C-terminally processed by CtpA; processing is essential to allow assembly of the oxygen-evolving complex and photosynthetic growth. In terms of processing, tyr-161 forms a radical intermediate that is referred to as redox-active TyrZ, YZ or Y-Z.

The protein localises to the cellular thylakoid membrane. The enzyme catalyses 2 a plastoquinone + 4 hnu + 2 H2O = 2 a plastoquinol + O2. In terms of biological role, photosystem II (PSII) is a light-driven water:plastoquinone oxidoreductase that uses light energy to abstract electrons from H(2)O, generating O(2) and a proton gradient subsequently used for ATP formation. It consists of a core antenna complex that captures photons, and an electron transfer chain that converts photonic excitation into a charge separation. The D1/D2 (PsbA/PsbD) reaction center heterodimer binds P680, the primary electron donor of PSII as well as several subsequent electron acceptors. The protein is Photosystem II protein D1 2 of Synechocystis sp. (strain ATCC 27184 / PCC 6803 / Kazusa).